Consider the following 245-residue polypeptide: 3-deoxy-manno-octulosonate cytidylyltransferase (245 aa).

Belongs to the KdsB family.

It is found in the cytoplasm. It catalyses the reaction 3-deoxy-alpha-D-manno-oct-2-ulosonate + CTP = CMP-3-deoxy-beta-D-manno-octulosonate + diphosphate. It functions in the pathway nucleotide-sugar biosynthesis; CMP-3-deoxy-D-manno-octulosonate biosynthesis; CMP-3-deoxy-D-manno-octulosonate from 3-deoxy-D-manno-octulosonate and CTP: step 1/1. Its pathway is bacterial outer membrane biogenesis; lipopolysaccharide biosynthesis. Functionally, activates KDO (a required 8-carbon sugar) for incorporation into bacterial lipopolysaccharide in Gram-negative bacteria. This Rhodopseudomonas palustris (strain BisB5) protein is 3-deoxy-manno-octulosonate cytidylyltransferase.